We begin with the raw amino-acid sequence, 462 residues long: Glycine--tRNA ligase (462 aa).

The substrate site is built by Arg94 and Glu143. Residues 175-177 (RNE), 185-190 (FRTCEF), 259-260 (EL), and 308-311 (GLTR) contribute to the ATP site. Residue 190–194 (FEQME) participates in substrate binding. 304–308 (ETSAG) contributes to the substrate binding site.

It belongs to the class-II aminoacyl-tRNA synthetase family. Homodimer.

The protein resides in the cytoplasm. It catalyses the reaction tRNA(Gly) + glycine + ATP = glycyl-tRNA(Gly) + AMP + diphosphate. Functionally, catalyzes the attachment of glycine to tRNA(Gly). The chain is Glycine--tRNA ligase from Treponema pallidum (strain Nichols).